Here is a 186-residue protein sequence, read N- to C-terminus: Methylamine dehydrogenase light chain (186 aa).

Positions 1-57 (MKKNTGFDSGIEKLARKTASKTGRRSFIGKLGGFLVGSALLPLLPVDRRGRMNEAHA) form a signal peptide, tat-type signal. Cystine bridges form between Cys-78–Cys-143, Cys-84–Cys-116, Cys-91–Cys-176, Cys-93–Cys-141, Cys-101–Cys-132, and Cys-133–Cys-164. At Trp-112 the chain carries Tryptophylquinone. Positions 112 to 163 (WVASCFNPGDGQTYLIAYRDCCGKQTCGRCNCVNVQGELPVYRPEFNNDIVW) form a cross-link, tryptophan tryptophylquinone (Trp-Trp).

Belongs to the aromatic amine dehydrogenase light chain family. As to quaternary structure, heterotetramer of two light and two heavy chains. It depends on tryptophan tryptophylquinone residue as a cofactor. Predicted to be exported by the Tat system. The position of the signal peptide cleavage has not been experimentally proven. In terms of processing, tryptophan tryptophylquinone (TTQ) is formed by oxidation of the indole ring of a tryptophan to form tryptophylquinone followed by covalent cross-linking with another tryptophan residue.

Its subcellular location is the periplasm. It catalyses the reaction 2 oxidized [amicyanin] + methylamine + H2O = 2 reduced [amicyanin] + formaldehyde + NH4(+) + 2 H(+). Its pathway is one-carbon metabolism; methylamine degradation; formaldehyde from methylamine: step 1/1. Methylamine dehydrogenase carries out the oxidation of methylamine. Electrons are passed from methylamine dehydrogenase to amicyanin. The chain is Methylamine dehydrogenase light chain (mauA) from Methylobacillus flagellatus (strain ATCC 51484 / DSM 6875 / VKM B-1610 / KT).